The following is a 260-amino-acid chain: UPF0246 protein SCO2297 (260 aa).

This sequence belongs to the UPF0246 family.

This Streptomyces coelicolor (strain ATCC BAA-471 / A3(2) / M145) protein is UPF0246 protein SCO2297.